Reading from the N-terminus, the 342-residue chain is Tetraacyldisaccharide 4'-kinase (342 aa).

56 to 63 (TAGGAGKT) provides a ligand contact to ATP.

The protein belongs to the LpxK family.

The enzyme catalyses a lipid A disaccharide + ATP = a lipid IVA + ADP + H(+). It participates in glycolipid biosynthesis; lipid IV(A) biosynthesis; lipid IV(A) from (3R)-3-hydroxytetradecanoyl-[acyl-carrier-protein] and UDP-N-acetyl-alpha-D-glucosamine: step 6/6. Its function is as follows. Transfers the gamma-phosphate of ATP to the 4'-position of a tetraacyldisaccharide 1-phosphate intermediate (termed DS-1-P) to form tetraacyldisaccharide 1,4'-bis-phosphate (lipid IVA). This chain is Tetraacyldisaccharide 4'-kinase, found in Parvibaculum lavamentivorans (strain DS-1 / DSM 13023 / NCIMB 13966).